Consider the following 264-residue polypeptide: MKNRRRIYEGKAKILYEGPEPGTLIQFFKDDATAFNKKKHEVVDGKGVLNNRISEHIFNHLNRMGIPTHFIRRLNMREQLIKEVEIIPLEVVVRNVAAGSLSKRLGIEEGTVLPRSIIEFYYKADALDDPMVSEEHITAFGWASPQEIDDVMALAIRVNDFLSGLFMGVGIQLVDFKIECGRLFEGDMMRIVVADEISPDSCRLWDVATQDKLDKDRFRRDMGGLVEAYQEVARRLGIMNENEPPRPTGPVLVASTDVVKGKPH.

The protein belongs to the SAICAR synthetase family.

It catalyses the reaction 5-amino-1-(5-phospho-D-ribosyl)imidazole-4-carboxylate + L-aspartate + ATP = (2S)-2-[5-amino-1-(5-phospho-beta-D-ribosyl)imidazole-4-carboxamido]succinate + ADP + phosphate + 2 H(+). It functions in the pathway purine metabolism; IMP biosynthesis via de novo pathway; 5-amino-1-(5-phospho-D-ribosyl)imidazole-4-carboxamide from 5-amino-1-(5-phospho-D-ribosyl)imidazole-4-carboxylate: step 1/2. In Mesorhizobium japonicum (strain LMG 29417 / CECT 9101 / MAFF 303099) (Mesorhizobium loti (strain MAFF 303099)), this protein is Phosphoribosylaminoimidazole-succinocarboxamide synthase 1 (purC1).